The following is a 173-amino-acid chain: Mitochondrial holo-[acyl-carrier-protein] synthase (173 aa).

It belongs to the P-Pant transferase superfamily. AcpS family.

The protein localises to the mitochondrion. The catalysed reaction is apo-[ACP] + CoA = holo-[ACP] + adenosine 3',5'-bisphosphate + H(+). Its function is as follows. Transfers the 4'-phosphopantetheine moiety from coenzyme A to a Ser of mitochondrial acyl-carrier-protein. The protein is Mitochondrial holo-[acyl-carrier-protein] synthase (PPT2) of Saccharomyces cerevisiae (strain ATCC 204508 / S288c) (Baker's yeast).